A 332-amino-acid polypeptide reads, in one-letter code: MNAKHAPFRHYLDLADARLGSQVVAVSDEWFAPASRMLQAGEPVWKEGVFDDSGKWMDGWETRRKRFEGHDQAVIRLGVPGVLKGVDIDTRFFTGNHPPAASLDGCFCTEGDPDDSTSWSEVLPAVGLQGDSHHYHPIDDERPWTHLRLNIYPDGGIARLRLYGVPYRDWSSLPPGTALDLAAAVNGGRALACSDQHFGRMGNLLNPGRAINMGDGWETGRRRTPGHDWVIVALGHPGSIEAAVVDTLHFKGNYPESCSIQAAFVEGGNEARIEAQSLFWRELLPAQKLEMHQEHRFERHLNALGPITHVRLNIFPDGGVSRLRLFGSPQLP.

Belongs to the allantoicase family.

It catalyses the reaction allantoate + H2O = (S)-ureidoglycolate + urea. It functions in the pathway nitrogen metabolism; (S)-allantoin degradation; (S)-ureidoglycolate from allantoate (aminidohydrolase route): step 1/1. In Pseudomonas aeruginosa (strain UCBPP-PA14), this protein is Probable allantoicase.